The following is a 315-amino-acid chain: tRNA uridine(34) hydroxylase (315 aa).

The 102-residue stretch at 122–223 folds into the Rhodanese domain; sequence SDPDVLVIDT…YLEQIPQPES (102 aa). Cysteine 183 (cysteine persulfide intermediate) is an active-site residue.

It belongs to the TrhO family.

It catalyses the reaction uridine(34) in tRNA + AH2 + O2 = 5-hydroxyuridine(34) in tRNA + A + H2O. Its function is as follows. Catalyzes oxygen-dependent 5-hydroxyuridine (ho5U) modification at position 34 in tRNAs. This chain is tRNA uridine(34) hydroxylase, found in Caulobacter vibrioides (strain ATCC 19089 / CIP 103742 / CB 15) (Caulobacter crescentus).